The sequence spans 277 residues: MAAPIGRTLLGVAKGWRQLDRLWAGSSRGLSLEAAPSSSRSPWRLSGALCLQRPPLITKPLTPLQEEMAGLLQQVEVERSLYSDHELRALDEAQRLAKKKADLYDEEQDQDVTLAQDLEDMWEQEFLQFRPGARETEADKKNDRTSLHRKLDRNLILLVREKLGDQDLWMLPQVEWQPGETLRGTAERILATLSENNMEAKFLGNAPCGHYKFKFPKAIRTESDLGVKVFFFKALLLTGDFVQTGKKGRHVWASKEELGDYLQPKYLAQVRRFLLDL.

Lys217 carries the post-translational modification N6-succinyllysine. Position 228 is an N6-acetyllysine (Lys228). Lys246 carries the post-translational modification N6-succinyllysine.

The protein belongs to the mitochondrion-specific ribosomal protein mL46 family. Component of the mitochondrial ribosome large subunit (39S) which comprises a 16S rRNA and about 50 distinct proteins.

The protein resides in the mitochondrion. This chain is Large ribosomal subunit protein mL46 (Mrpl46), found in Rattus norvegicus (Rat).